The following is a 267-amino-acid chain: Large ribosomal subunit protein bL9m (267 aa).

A mitochondrion-targeting transit peptide spans Met1–Gly52.

It belongs to the bacterial ribosomal protein bL9 family. As to quaternary structure, component of the mitochondrial ribosome large subunit (39S) which comprises a 16S rRNA and about 50 distinct proteins.

The protein resides in the mitochondrion. The chain is Large ribosomal subunit protein bL9m (MRPL9) from Papio anubis (Olive baboon).